Reading from the N-terminus, the 251-residue chain is Ubiquinone/menaquinone biosynthesis C-methyltransferase UbiE (251 aa).

S-adenosyl-L-methionine contacts are provided by residues threonine 74, aspartate 95, 123 to 124, and serine 140; that span reads NA.

Belongs to the class I-like SAM-binding methyltransferase superfamily. MenG/UbiE family.

The enzyme catalyses a 2-demethylmenaquinol + S-adenosyl-L-methionine = a menaquinol + S-adenosyl-L-homocysteine + H(+). The catalysed reaction is a 2-methoxy-6-(all-trans-polyprenyl)benzene-1,4-diol + S-adenosyl-L-methionine = a 5-methoxy-2-methyl-3-(all-trans-polyprenyl)benzene-1,4-diol + S-adenosyl-L-homocysteine + H(+). It functions in the pathway quinol/quinone metabolism; menaquinone biosynthesis; menaquinol from 1,4-dihydroxy-2-naphthoate: step 2/2. It participates in cofactor biosynthesis; ubiquinone biosynthesis. Methyltransferase required for the conversion of demethylmenaquinol (DMKH2) to menaquinol (MKH2) and the conversion of 2-polyprenyl-6-methoxy-1,4-benzoquinol (DDMQH2) to 2-polyprenyl-3-methyl-6-methoxy-1,4-benzoquinol (DMQH2). This is Ubiquinone/menaquinone biosynthesis C-methyltransferase UbiE from Yersinia pestis bv. Antiqua (strain Antiqua).